We begin with the raw amino-acid sequence, 423 residues long: MRAEIISVGDELLRGQRVNTNAAVIARMLSAIGVSVSHIVACSDDEADIMATCSAALGRAEVVLVTGGLGPTRDDRTKHAIQQLLGRGTVLDEASYRRIEERMAARGSAVTPLLREQAVVIEGSHVIINSRGTAAGMLLDCGEPFAHHHLILMPGVPVEMEAMMHEGVIPFLTSLSNSVICQTPLKIVGVGETAIAAMLVEIEDAMPPATMLAYLPHTAGVDLMVSSRGNSREAVEAEHQQVVDAIMERVGTLVYATREISLEEVIGEMLLRQTFTVAVAESCTGGLLASRFTDISGASTYFQQGFVVYSNEAKERALGVPHETLVAHGAVSEEVAQGMALGCLEKSGADFALATTGIAGPTGGTPEKPLGTLCYAIAVKGGGVVVCRKVVMQGTREQRKVRFSTAVLREFWMLLKEREASEE.

The protein belongs to the CinA family.

This is CinA-like protein from Chlorobium chlorochromatii (strain CaD3).